Here is a 400-residue protein sequence, read N- to C-terminus: Elongation factor Tu 1 (400 aa).

One can recognise a tr-type G domain in the interval 10–209 (KPHLNIGTIG…AVDSYIPLPQ (200 aa)). The interval 19 to 26 (GHIDHGKT) is G1. 19 to 26 (GHIDHGKT) lines the GTP pocket. Mg(2+) is bound at residue threonine 26. Residues 60–64 (GITIN) are G2. The tract at residues 81 to 84 (DCPG) is G3. GTP contacts are provided by residues 81 to 85 (DCPGH) and 136 to 139 (NKTD). Residues 136 to 139 (NKTD) are G4. The G5 stretch occupies residues 174-176 (SAL).

The protein belongs to the TRAFAC class translation factor GTPase superfamily. Classic translation factor GTPase family. EF-Tu/EF-1A subfamily. In terms of assembly, monomer.

It localises to the cytoplasm. It carries out the reaction GTP + H2O = GDP + phosphate + H(+). Functionally, GTP hydrolase that promotes the GTP-dependent binding of aminoacyl-tRNA to the A-site of ribosomes during protein biosynthesis. This Syntrophomonas wolfei subsp. wolfei (strain DSM 2245B / Goettingen) protein is Elongation factor Tu 1.